A 536-amino-acid chain; its full sequence is ADP,ATP carrier protein 4 (536 aa).

The next 9 membrane-spanning stretches (helical) occupy residues 44 to 64, 77 to 97, 109 to 129, 172 to 194, 205 to 225, 244 to 264, 309 to 329, 349 to 369, and 378 to 398; these read VLLF…LYVL, SILF…IVIV, MLEV…FVIW, TMLY…FSRA, KFLP…GLLT, FSQV…TSFF, VVAA…GIVL, AQII…THLI, and AITA…MVFF. N-linked (GlcNAc...) asparagine glycans are attached at residues asparagine 400 and asparagine 421. Transmembrane regions (helical) follow at residues 465–485 and 493–513; these read LGIN…TVVF and VVSV…RSIL.

Belongs to the ADP/ATP translocase tlc family.

It is found in the cell membrane. In terms of biological role, ATP transporter involved in the uptake of ATP from the host cell cytoplasm. Provides the microsporidian cell with host ATP in exchange for ADP. This is an obligate exchange system. This energy acquiring activity is an important component of microsporidian parasitism. The polypeptide is ADP,ATP carrier protein 4 (NTT4) (Encephalitozoon cuniculi (strain GB-M1) (Microsporidian parasite)).